The chain runs to 233 residues: Sugar fermentation stimulation protein homolog (233 aa).

This sequence belongs to the SfsA family.

The polypeptide is Sugar fermentation stimulation protein homolog (Saccharophagus degradans (strain 2-40 / ATCC 43961 / DSM 17024)).